Consider the following 1200-residue polypeptide: Metabotropic glycine receptor (1200 aa).

An N-terminal signal peptide occupies residues Met1–Ala24. The interval Ser25–Ser62 is disordered. Residues Ser25–Arg417 lie on the Extracellular side of the membrane. Residues Tyr85–Trp281 form a cache-like region region. N-linked (GlcNAc...) asparagine glycans are attached at residues Asn98 and Asn143. The cysteines at positions 99 and 272 are disulfide-linked. Ser172 and Arg173 together coordinate glycine. The N-linked (GlcNAc...) asparagine glycan is linked to Asn215. The disordered stretch occupies residues Leu234–Arg253. Glu271 is a glycine binding site. N-linked (GlcNAc...) asparagine glycosylation is present at Asn274. Asp307 is a glycine binding site. A glycan (N-linked (GlcNAc...) asparagine) is linked at Asn333. A helical membrane pass occupies residues Leu418–Tyr439. Residues His440 to Gly451 lie on the Cytoplasmic side of the membrane. Residues Leu452–Phe474 form a helical membrane-spanning segment. Residues Glu475–Thr478 lie on the Extracellular side of the membrane. Residues Phe479 to Leu501 form a helical membrane-spanning segment. A disulfide bridge links Cys481 with Cys573. Residues Lys502 to Arg525 lie on the Cytoplasmic side of the membrane. Residues Val526–Ser547 form a helical membrane-spanning segment. The Extracellular segment spans residues Met548–Asp576. The chain crosses the membrane as a helical span at residues Arg577 to Cys597. Residues Tyr598–Arg611 lie on the Cytoplasmic side of the membrane. The helical transmembrane segment at Tyr612–Val633 threads the bilayer. The Extracellular segment spans residues Leu634–Trp642. A helical transmembrane segment spans residues Met643–Ile664. At Pro665–Lys1200 the chain is on the cytoplasmic side. Ser694, Ser705, and Ser708 each carry phosphoserine. The segment at Arg757–Leu875 is disordered. Basic and acidic residues-rich tracts occupy residues Cys769–Ala781 and Ser819–Thr828. Lys774 is covalently cross-linked (Glycyl lysine isopeptide (Lys-Gly) (interchain with G-Cter in ubiquitin)). Over residues Glu845–Lys856 the composition is skewed to low complexity. A phosphoserine mark is found at Ser865 and Ser944. The disordered stretch occupies residues Asp947–Ile988. Over residues Gln973–Ile988 the composition is skewed to polar residues. The short motif at Val1000–Glu1004 is the VCPWE motif 1 element. Ser1059 is modified (phosphoserine). The VCPWE motif 2 motif lies at Val1065–Glu1069. Residue Ser1074 is modified to Phosphoserine. The tract at residues Gln1130–Thr1160 is disordered. Positions Val1165–Glu1169 match the VCPWE motif 3 motif. The tract at residues Asn1177–Lys1200 is disordered. The segment covering Ala1178–Ser1191 has biased composition (polar residues).

This sequence belongs to the G-protein coupled receptor 3 family. In terms of assembly, homodimer. Associates with the RGS7-GNB5 complex, promoting its localization to the cell membrane and regulating its GTPase activator activity. Interacts (via VCPWE motifs) with GNAO1. Interacts with GPC4. Interacts with EGFLAM. In terms of tissue distribution, highly expressed in brain. Expressed in several brain regions including the cerebral cortex, hippocampus, cerebellum and caudate putamen. Only expressed in neurons, and not in microglia, oligodendrocytes or astrocytes. Expressed in the visual center of the cerebral cortex. Also expressed in the eye, including photoreceptors, ganglion cells and trabecular meshwork.

It is found in the cell membrane. Its subcellular location is the postsynaptic cell membrane. The protein localises to the presynaptic cell membrane. The protein resides in the nucleus. In terms of biological role, metabotropic receptor for glycine that controls synapse formation and function in the brain. Acts as an atypical G-protein coupled receptor that recruits and regulates the RGS7-GNB5 complex instead of activating G proteins. In absence of glycine ligand, promotes the GTPase activator activity of RGS7, increasing the GTPase activity of G protein alpha subunits, thereby driving them into their inactive GDP-bound form. Glycine-binding changes the conformation of the intracellular surface, inhibiting the GTPase activator activity of the RGS7-GNB5 complex, promoting G protein alpha subunits into their active GTP-bound form and regulating cAMP levels. Also able to bind taurine, a compound closely related to glycine, but with a two-fold lower affinity. Glycine receptor-dependent regulation of cAMP controls key ion channels, kinases and neurotrophic factors involved in neuronal excitability and synaptic transmission. Plays a pivotal role in regulating mood and cognition via its ability to regulate neuronal excitability in L2/L3 pyramidal neurons of the prefrontal cortex. Also involved in spatial learning by regulating hippocampal CA1 neuronal excitability. Acts as a synaptic organizer in the hippocampus, required for proper mossy fiber-CA3 neurocircuitry establishment, structure and function: induces presynaptic differentiation in contacting axons via its interaction with GPC4. In addition to glycine, may also act as a receptor for osteocalcin (Bglap or Bglap2) hormone: osteocalcin-binding initiates a signaling response that prevents neuronal apoptosis in the hippocampus and regulates the synthesis of neurotransmitters. The protein is Metabotropic glycine receptor of Mus musculus (Mouse).